The sequence spans 125 residues: Small ribosomal subunit protein uS12m (125 aa).

The tract at residues 1 to 26 is disordered; sequence MPTINQLLRKKSSRQAPKLKSKKPAL. Over residues 8–23 the composition is skewed to basic residues; sequence LRKKSSRQAPKLKSKK.

Belongs to the universal ribosomal protein uS12 family.

It is found in the mitochondrion. The sequence is that of Small ribosomal subunit protein uS12m (RPS12) from Prototheca wickerhamii.